Consider the following 85-residue polypeptide: MSFRKVEKKPTEMGRNMTHEKSDSDSDNEGAPMTVGGYTEFVARSDSDWDEPVYSGKARSNYNLTGTAKGTGPINSFSRKHFPNY.

A compositionally biased stretch (basic and acidic residues) spans 1-24 (MSFRKVEKKPTEMGRNMTHEKSDS). Disordered regions lie at residues 1–35 (MSFRKVEKKPTEMGRNMTHEKSDSDSDNEGAPMTV) and 55–85 (SGKARSNYNLTGTAKGTGPINSFSRKHFPNY). Residues 58 to 77 (ARSNYNLTGTAKGTGPINSF) are compositionally biased toward polar residues.

Expressed predominantly within leaves and cotyledons vasculatures. Mainly observed in fully expanded leaves, at the base of mature inflorescences, in senescing leaves and cauline leaves, and, to a lower extent, in hypocotyls and rosette leaves prior to flowering.

Functionally, plays a role in carbon allocation, including during senescence and stresses, thus impacting starch accumulation. In Arabidopsis thaliana (Mouse-ear cress), this protein is Senescence-associated and QQS-related protein.